Here is a 162-residue protein sequence, read N- to C-terminus: Endoribonuclease YbeY (162 aa).

Zn(2+) is bound by residues histidine 117, histidine 121, and histidine 127.

The protein belongs to the endoribonuclease YbeY family. The cofactor is Zn(2+).

Its subcellular location is the cytoplasm. Its function is as follows. Single strand-specific metallo-endoribonuclease involved in late-stage 70S ribosome quality control and in maturation of the 3' terminus of the 16S rRNA. This chain is Endoribonuclease YbeY, found in Francisella tularensis subsp. tularensis (strain WY96-3418).